The sequence spans 352 residues: C-X-C chemokine receptor type 4 (352 aa).

The interval 1–21 is important for chemokine binding and signaling; sequence MEGISIYTSDNYTEEMGSGDY. The Extracellular segment spans residues 1–38; the sequence is MEGISIYTSDNYTEEMGSGDYDSIKEPCFREENAHFNR. The residue at position 7 (Tyr-7) is a Sulfotyrosine. N-linked (GlcNAc...) asparagine glycosylation is present at Asn-11. At Tyr-12 the chain carries Sulfotyrosine. O-linked (Xyl...) (chondroitin sulfate) serine glycosylation is present at Ser-18. At Tyr-21 the chain carries Sulfotyrosine. 2 disulfide bridges follow: Cys-28–Cys-274 and Cys-109–Cys-186. Residues 39 to 63 traverse the membrane as a helical segment; that stretch reads IFLPTIYSIIFLTGIVGNGLVILVM. At 64–77 the chain is on the cytoplasmic side; the sequence is GYQKKLRSMTDKYR. A helical membrane pass occupies residues 78 to 99; it reads LHLSVADLLFVITLPFWAVDAV. Residues 94–97 form a chemokine binding region; it reads WAVD. The Extracellular portion of the chain corresponds to 100-110; that stretch reads ANWYFGNFLCK. The helical transmembrane segment at 111-130 threads the bilayer; the sequence is AVHVIYTVNLYSSVLILAFI. The chemokine binding stretch occupies residues 113–117; the sequence is HVIYT. Topologically, residues 131–154 are cytoplasmic; it reads SLDRYLAIVHATNSQRPRKLLAEK. The Important for signaling signature appears at 133 to 135; the sequence is DRY. The segment at 135–147 is involved in dimerization; when bound to chemokine; the sequence is YLAIVHATNSQRP. Residues 155-174 form a helical membrane-spanning segment; the sequence is VVYVGVWIPALLLTIPDFIF. The Extracellular segment spans residues 175–195; the sequence is ASVSEADDRYICDRFYPNDLW. The segment at 186-190 is chemokine binding, important for signaling; it reads CDRFY. The tract at residues 191-210 is involved in dimerization; it reads PNDLWVVVFQFQHIMVGLIL. The helical transmembrane segment at 196-216 threads the bilayer; sequence VVVFQFQHIMVGLILPGIVIL. The Cytoplasmic segment spans residues 217 to 241; sequence SCYCIIISKLSHSKGHQKRKALKTT. The chain crosses the membrane as a helical span at residues 242–261; the sequence is VILILAFFACWLPYYIGISI. The Extracellular segment spans residues 262–282; it reads DSFILLEIIKQGCEFENTVHK. The tract at residues 266 to 268 is involved in dimerization; that stretch reads LLE. Residues 283–302 traverse the membrane as a helical segment; the sequence is WISITEALAFFHCCLNPILY. Over 303 to 352 the chain is Cytoplasmic; sequence AFLGAKFKTSAQHALTSVSRGSSLKILSKGKRGGHSSVSTESESSSFHSS. Ser-319 and Ser-321 each carry phosphoserine. Residues Ser-324 and Ser-325 each carry the phosphoserine; by PKC and GRK6 modification. A disordered region spans residues 329–352; sequence LSKGKRGGHSSVSTESESSSFHSS. At Ser-330 the chain carries Phosphoserine; by GRK6. Residue Lys-331 forms a Glycyl lysine isopeptide (Lys-Gly) (interchain with G-Cter in ubiquitin) linkage. Residues 337–352 show a composition bias toward low complexity; sequence HSSVSTESESSSFHSS. Ser-339 is modified (phosphoserine; by GRK6). 2 positions are modified to phosphoserine: Ser-348 and Ser-351.

Belongs to the G-protein coupled receptor 1 family. Monomer. Can form homodimers. Interacts with CD164. Interacts with ARRB2; the interaction is dependent on the C-terminal phosphorylation of CXCR4 and allows activation of MAPK1 and MAPK3. Interacts with ARR3; the interaction is dependent on the C-terminal phosphorylation of CXCR4 and modulates calcium mobilization. Interacts with RNF113A; the interaction, enhanced by CXCL12, promotes CXCR4 ubiquitination and subsequent degradation. Interacts (via the cytoplasmic C-terminal) with ITCH (via the WW domains I and II); the interaction, enhanced by CXCL12, promotes CXCR4 ubiquitination and leads to its degradation. Interacts with extracellular ubiquitin. Interacts with DBN1; this interaction is enhanced by antigenic stimulation. Following LPS binding, may form a complex with GDF5, HSP90AA1 and HSPA8. Post-translationally, phosphorylated on agonist stimulation. Rapidly phosphorylated on serine and threonine residues in the C-terminal. Phosphorylation at Ser-324 and Ser-325 leads to recruitment of ITCH, ubiquitination and protein degradation. In terms of processing, ubiquitinated after ligand binding, leading to its degradation. Ubiquitinated by ITCH at the cell membrane on agonist stimulation. The ubiquitin-dependent mechanism, endosomal sorting complex required for transport (ESCRT), then targets CXCR4 for lysosomal degradation. This process is dependent also on prior Ser-/Thr-phosphorylation in the C-terminal of CXCR4. Also binding of ARRB1 to STAM negatively regulates CXCR4 sorting to lysosomes though modulating ubiquitination of SFR5S. Sulfation is required for efficient binding of CXCL12/SDF-1alpha and promotes its dimerization. Post-translationally, O- and N-glycosylated. N-glycosylation can mask coreceptor function. The O-glycosylation chondroitin sulfate attachment does not affect interaction with CXCL12/SDF-1alpha nor its coreceptor activity.

The protein resides in the cell membrane. It is found in the cell junction. It localises to the early endosome. The protein localises to the late endosome. Its subcellular location is the lysosome. In terms of biological role, receptor for the C-X-C chemokine CXCL12/SDF-1 that transduces a signal by increasing intracellular calcium ion levels and enhancing MAPK1/MAPK3 activation. Involved in the AKT signaling cascade. Plays a role in regulation of cell migration, e.g. during wound healing. Acts as a receptor for extracellular ubiquitin; leading to enhanced intracellular calcium ions and reduced cellular cAMP levels. Binds bacterial lipopolysaccharide (LPS) et mediates LPS-induced inflammatory response, including TNF secretion by monocytes. Involved in hematopoiesis and in cardiac ventricular septum formation. Also plays an essential role in vascularization of the gastrointestinal tract, probably by regulating vascular branching and/or remodeling processes in endothelial cells. Involved in cerebellar development. In the CNS, could mediate hippocampal-neuron survival. This Papio anubis (Olive baboon) protein is C-X-C chemokine receptor type 4 (CXCR4).